An 819-amino-acid polypeptide reads, in one-letter code: Leucine--tRNA ligase (819 aa).

The short motif at 51 to 61 (PYPSGNLHIGH) is the 'HIGH' region element. Residues 586 to 590 (KMSKS) carry the 'KMSKS' region motif. Lys-589 is an ATP binding site.

It belongs to the class-I aminoacyl-tRNA synthetase family.

It is found in the cytoplasm. It carries out the reaction tRNA(Leu) + L-leucine + ATP = L-leucyl-tRNA(Leu) + AMP + diphosphate. The chain is Leucine--tRNA ligase from Deinococcus geothermalis (strain DSM 11300 / CIP 105573 / AG-3a).